A 241-amino-acid chain; its full sequence is Small ribosomal subunit protein uS2 (241 aa).

The protein belongs to the universal ribosomal protein uS2 family.

In Enterobacter sp. (strain 638), this protein is Small ribosomal subunit protein uS2.